The chain runs to 107 residues: MTQVFQGRSFLAEKDFTRAELEYLIDFSAHLKDLKKRGVPHHYLEGKNIALLFEKTSTRTRAAFTTAAIDLGAHPEYLGANDIQLGKKESTEDTAKVLGRMFDGIEF.

Carbamoyl phosphate contacts are provided by residues 57-61 (STRTR) and glutamine 84.

The protein belongs to the aspartate/ornithine carbamoyltransferase superfamily. OTCase family.

It is found in the cytoplasm. The catalysed reaction is carbamoyl phosphate + L-ornithine = L-citrulline + phosphate + H(+). It participates in amino-acid degradation; L-arginine degradation via ADI pathway; carbamoyl phosphate from L-arginine: step 2/2. The protein is Ornithine carbamoyltransferase, catabolic (arcB) of Streptococcus pyogenes.